Reading from the N-terminus, the 397-residue chain is G2/mitotic-specific cyclin-B1 (397 aa).

A compositionally biased stretch (polar residues) spans 1-17; sequence MALRVTRNTRLASSENQ. The disordered stretch occupies residues 1–30; that stretch reads MALRVTRNTRLASSENQGALPGKAAVANKP.

It belongs to the cyclin family. Cyclin AB subfamily. Interacts with the CDK1 protein kinase to form a serine/threonine kinase holoenzyme complex also known as maturation promoting factor (MPF). The cyclin subunit imparts substrate specificity to the complex.

Functionally, essential for the control of the cell cycle at the G2/M (mitosis) transition. The chain is G2/mitotic-specific cyclin-B1 (ccnb1) from Carassius auratus (Goldfish).